A 412-amino-acid polypeptide reads, in one-letter code: Membrane fusion protein MtrC (412 aa).

An N-terminal signal peptide occupies residues 1-24; that stretch reads MAFYASKAMRAAALAAAVALALSS. Cys25 is lipidated: N-palmitoyl cysteine. The S-diacylglycerol cysteine moiety is linked to residue Cys25. The segment at 377–412 is disordered; it reads AKKVTPKEWAPSENQAAAPQAGVQTASEAKPASEAK. A compositionally biased stretch (polar residues) spans 388-403; sequence SENQAAAPQAGVQTAS.

This sequence belongs to the membrane fusion protein (MFP) (TC 8.A.1) family.

The protein localises to the cell inner membrane. Functionally, cell membrane lipoprotein, involved in cell membrane permeability to hydrophobic compounds such as antibiotics, dyes and detergents. The chain is Membrane fusion protein MtrC (mtrC) from Neisseria gonorrhoeae.